Here is a 566-residue protein sequence, read N- to C-terminus: DNA helicase/primase (566 aa).

Residues C17, C20, C36, and C39 each coordinate Zn(2+). Residues 17 to 39 (CDNCGSSDGNSLFSDGHTFCYVC) form a C4-like; zinc ribbon fold zinc finger. The region spanning 151–238 (KKIVVTEGEI…RVAVLPCKDA (88 aa)) is the Toprim domain. Positions 157, 207, and 237 each coordinate Mg(2+). Residues 281–548 (SEESVGLLFS…TGWLEPSSYS (268 aa)) enclose the SF4 helicase domain. 312 to 319 (SGSGMGKS) contacts ATP. The interval 543 to 566 (EPSSYSGEEESHSESTDWSNDTDF) is disordered. Positions 550–566 (EEESHSESTDWSNDTDF) are binding to viral DNA polymerase.

This sequence belongs to the Teseptimavirus DNA helicase/primase family. As to quaternary structure, homohexamer. Assembles as a hexamer onto linear or circular ssDNA in the presence of ATP or dTTP. Present in a mixture of heptamers and hexamers in the absence of DNA. Interacts (via C-terminus) with the viral DNA polymerase that is bound to DNA; this interaction is essential to initiate leading-strand DNA synthesis. The priming complex consists of 2 DNA polymerases and 1 helicase-primase hexamer that assemble on the DNA template. Interacts with the single-stranded DNA-binding protein. Part of the replicase complex that includes the DNA polymerase, thioredoxin, the primase/helicase and the single-stranded DNA binding protein. Requires Mg(2+) as cofactor.

The enzyme catalyses ATP + H2O = ADP + phosphate + H(+). Functionally, ATP-dependent DNA helicase and primase essential for viral DNA replication and recombination. The helicase moves 5' -&gt; 3' on the lagging strand template, unwinding the DNA duplex ahead of the leading strand polymerase at the replication fork and generating ssDNA for both leading and lagging strand synthesis. ATP or dTTP hydrolysis propels each helicase domain to translocate 2 nt per step sequentially along DNA. Mediates strand transfer when a joint molecule is available and participates in recombinational DNA repair through its role in strand exchange. Primase activity synthesizes short RNA primers at the sequence 5'-GTC-3' on the lagging strand that the polymerase elongates using dNTPs and providing the primase is still present. This is DNA helicase/primase from Escherichia phage T7 (Bacteriophage T7).